The following is a 234-amino-acid chain: LexA repressor (234 aa).

The interval 1–29 is disordered; sequence MSDAANPEGHKRSLPGRPPGIRADSSGLT. The segment at residues 52–72 is a DNA-binding region (H-T-H motif); that stretch reads MREIGQAVGLSSTSSVAHQLM. The disordered stretch occupies residues 90-109; it reads YEVRGSDQAASVQPTDTAGK. Catalysis depends on for autocatalytic cleavage activity residues Ser158 and Lys195.

It belongs to the peptidase S24 family. In terms of assembly, homodimer.

The catalysed reaction is Hydrolysis of Ala-|-Gly bond in repressor LexA.. Its function is as follows. Represses a number of genes involved in the response to DNA damage (SOS response), including recA and lexA. In the presence of single-stranded DNA, RecA interacts with LexA causing an autocatalytic cleavage which disrupts the DNA-binding part of LexA, leading to derepression of the SOS regulon and eventually DNA repair. This chain is LexA repressor, found in Streptomyces coelicolor (strain ATCC BAA-471 / A3(2) / M145).